Reading from the N-terminus, the 138-residue chain is Transcription antitermination protein NusB (138 aa).

Belongs to the NusB family.

Functionally, involved in transcription antitermination. Required for transcription of ribosomal RNA (rRNA) genes. Binds specifically to the boxA antiterminator sequence of the ribosomal RNA (rrn) operons. The polypeptide is Transcription antitermination protein NusB (Coxiella burnetii (strain CbuK_Q154) (Coxiella burnetii (strain Q154))).